Reading from the N-terminus, the 82-residue chain is Small ribosomal subunit protein uS17 (82 aa).

Belongs to the universal ribosomal protein uS17 family. In terms of assembly, part of the 30S ribosomal subunit.

Functionally, one of the primary rRNA binding proteins, it binds specifically to the 5'-end of 16S ribosomal RNA. This Shewanella sp. (strain W3-18-1) protein is Small ribosomal subunit protein uS17.